The sequence spans 165 residues: Protein SprT (165 aa).

In terms of domain architecture, SprT-like spans 22–163 (LAQANLKLGC…RCVHCGEQLV (142 aa)). Histidine 78 lines the Zn(2+) pocket. The active site involves glutamate 79. Histidine 82 contacts Zn(2+).

Belongs to the SprT family. The cofactor is Zn(2+).

The protein resides in the cytoplasm. The sequence is that of Protein SprT from Shigella dysenteriae serotype 1 (strain Sd197).